Consider the following 481-residue polypeptide: ATP synthase subunit beta (481 aa).

160–167 (GGAGVGKT) is a binding site for ATP.

It belongs to the ATPase alpha/beta chains family. F-type ATPases have 2 components, CF(1) - the catalytic core - and CF(0) - the membrane proton channel. CF(1) has five subunits: alpha(3), beta(3), gamma(1), delta(1), epsilon(1). CF(0) has three main subunits: a(1), b(2) and c(9-12). The alpha and beta chains form an alternating ring which encloses part of the gamma chain. CF(1) is attached to CF(0) by a central stalk formed by the gamma and epsilon chains, while a peripheral stalk is formed by the delta and b chains.

The protein resides in the cell inner membrane. The catalysed reaction is ATP + H2O + 4 H(+)(in) = ADP + phosphate + 5 H(+)(out). Its function is as follows. Produces ATP from ADP in the presence of a proton gradient across the membrane. The catalytic sites are hosted primarily by the beta subunits. The protein is ATP synthase subunit beta of Anaeromyxobacter sp. (strain Fw109-5).